A 366-amino-acid chain; its full sequence is Phospho-N-acetylmuramoyl-pentapeptide-transferase (366 aa).

Helical transmembrane passes span 27 to 47, 71 to 91, 93 to 113, 138 to 158, 174 to 194, 205 to 225, 245 to 265, 268 to 288, 297 to 317, and 343 to 363; these read AALF…IASL, TPTM…LLWA, LSSI…AIGF, FVIA…AGAA, LMLN…VGAG, GLAI…AYLA, LAVI…FNAP, AIFM…TVAV, VIIG…VFWF, and QVVI…LSTL.

This sequence belongs to the glycosyltransferase 4 family. MraY subfamily. Requires Mg(2+) as cofactor.

Its subcellular location is the cell inner membrane. It carries out the reaction UDP-N-acetyl-alpha-D-muramoyl-L-alanyl-gamma-D-glutamyl-meso-2,6-diaminopimeloyl-D-alanyl-D-alanine + di-trans,octa-cis-undecaprenyl phosphate = di-trans,octa-cis-undecaprenyl diphospho-N-acetyl-alpha-D-muramoyl-L-alanyl-D-glutamyl-meso-2,6-diaminopimeloyl-D-alanyl-D-alanine + UMP. It functions in the pathway cell wall biogenesis; peptidoglycan biosynthesis. Catalyzes the initial step of the lipid cycle reactions in the biosynthesis of the cell wall peptidoglycan: transfers peptidoglycan precursor phospho-MurNAc-pentapeptide from UDP-MurNAc-pentapeptide onto the lipid carrier undecaprenyl phosphate, yielding undecaprenyl-pyrophosphoryl-MurNAc-pentapeptide, known as lipid I. The polypeptide is Phospho-N-acetylmuramoyl-pentapeptide-transferase (Sinorhizobium medicae (strain WSM419) (Ensifer medicae)).